Reading from the N-terminus, the 90-residue chain is Small ribosomal subunit protein bS6 (90 aa).

Residue Lys-33 forms an Isoglutamyl lysine isopeptide (Lys-Gln) (interchain with Q-Cter in protein Pup) linkage.

It belongs to the bacterial ribosomal protein bS6 family.

Functionally, binds together with bS18 to 16S ribosomal RNA. This chain is Small ribosomal subunit protein bS6 (rpsF), found in Mycolicibacterium smegmatis (strain ATCC 700084 / mc(2)155) (Mycobacterium smegmatis).